The primary structure comprises 41 residues: MPFVNQEIVLQIEFEKPTSQSYQVGNFCQGRLNHQETEGGT.

This is an uncharacterized protein from Dictyostelium discoideum (Social amoeba).